Reading from the N-terminus, the 211-residue chain is LexA repressor (211 aa).

Residues 27–47 constitute a DNA-binding region (H-T-H motif); that stretch reads QTEIARAFGFKGVRAVQHHLD. Residues S131 and K168 each act as for autocatalytic cleavage activity in the active site.

It belongs to the peptidase S24 family. Homodimer.

The enzyme catalyses Hydrolysis of Ala-|-Gly bond in repressor LexA.. Represses a number of genes involved in the response to DNA damage (SOS response), including recA and lexA. In the presence of single-stranded DNA, RecA interacts with LexA causing an autocatalytic cleavage which disrupts the DNA-binding part of LexA, leading to derepression of the SOS regulon and eventually DNA repair. The sequence is that of LexA repressor from Xylella fastidiosa (strain M23).